The chain runs to 443 residues: tRNA-2-methylthio-N(6)-dimethylallyladenosine synthase (443 aa).

In terms of domain architecture, MTTase N-terminal spans 1–114 (MRFYIKTFGC…VTEAVKRALQ (114 aa)). Cys10, Cys46, Cys79, Cys150, Cys154, and Cys157 together coordinate [4Fe-4S] cluster. A Radical SAM core domain is found at 136-367 (RSSKHHAWVT…MNLQKRINRK (232 aa)). Residues 370–431 (ERYKGKTVRV…AGPLYGKVVW (62 aa)) form the TRAM domain.

Belongs to the methylthiotransferase family. MiaB subfamily. In terms of assembly, monomer. The cofactor is [4Fe-4S] cluster.

It localises to the cytoplasm. It catalyses the reaction N(6)-dimethylallyladenosine(37) in tRNA + (sulfur carrier)-SH + AH2 + 2 S-adenosyl-L-methionine = 2-methylsulfanyl-N(6)-dimethylallyladenosine(37) in tRNA + (sulfur carrier)-H + 5'-deoxyadenosine + L-methionine + A + S-adenosyl-L-homocysteine + 2 H(+). In terms of biological role, catalyzes the methylthiolation of N6-(dimethylallyl)adenosine (i(6)A), leading to the formation of 2-methylthio-N6-(dimethylallyl)adenosine (ms(2)i(6)A) at position 37 in tRNAs that read codons beginning with uridine. This chain is tRNA-2-methylthio-N(6)-dimethylallyladenosine synthase, found in Thermotoga sp. (strain RQ2).